Reading from the N-terminus, the 347-residue chain is Sesquiterpene synthase M422DRAFT_47084 (347 aa).

D93, N228, S232, and E236 together coordinate Mg(2+). The DDXXD motif signature appears at 93-97 (DEYTD). The (2E,6E)-farnesyl diphosphate site is built by R318 and Y319.

This sequence belongs to the terpene synthase family. Mg(2+) is required as a cofactor.

It catalyses the reaction (2E,6E)-farnesyl diphosphate = viridiflorene + diphosphate. Functionally, terpene cyclase that catalyzes the cyclization of farnesyl diphosphate (FPP) to viridiflorene and viridiflorol. The sequence is that of Sesquiterpene synthase M422DRAFT_47084 from Sphaerobolus stellatus (strain SS14).